The sequence spans 542 residues: Probable serine/threonine-protein kinase ndrB (542 aa).

Residues 1-52 (MNVERKLESLSLQQQQQEEQQDESEQPNQGVEDEEEEEYDEEEYEEEEEDIN) are disordered. Residues 9–18 (SLSLQQQQQE) are compositionally biased toward low complexity. A compositionally biased stretch (acidic residues) spans 19–51 (EQQDESEQPNQGVEDEEEEEYDEEEYEEEEEDI). The Protein kinase domain occupies 130-437 (FESIRIIGRG…VEEIQSHPFF (308 aa)). ATP is bound by residues 136–144 (IGRGAFGEV) and Lys159. The active-site Proton acceptor is the Asp258. The 73-residue stretch at 438–510 (KGVDWRRLRE…RNFDAMRDAF (73 aa)) folds into the AGC-kinase C-terminal domain. A disordered region spans residues 452–486 (IIPQLSSPTDTSNFDHYEEEQQPEPMQPVQSKSRR). The span at 455 to 465 (QLSSPTDTSNF) shows a compositional bias: polar residues.

This sequence belongs to the protein kinase superfamily. AGC Ser/Thr protein kinase family.

The protein resides in the cytoplasm. The catalysed reaction is L-seryl-[protein] + ATP = O-phospho-L-seryl-[protein] + ADP + H(+). It carries out the reaction L-threonyl-[protein] + ATP = O-phospho-L-threonyl-[protein] + ADP + H(+). This chain is Probable serine/threonine-protein kinase ndrB (ndrB), found in Dictyostelium discoideum (Social amoeba).